The chain runs to 321 residues: Cytochrome c biogenesis protein CcsA (321 aa).

The next 7 helical transmembrane spans lie at 17–37, 41–61, 68–88, 143–163, 227–247, 260–277, and 288–308; these read IISIVISVHLIKFLVPEIIGL, LEKGIITTSFCITGLLIIRWV, LSNLYESLMFLSWGFSTIHIF, MLLSYGALLCGSLLSVSLLVI, IINLGFTLLTIGILSGAVWAN, ETWAFITWTIFATYLHTR, and AIVASIGFLIIWICYFGVNLL.

Belongs to the CcmF/CycK/Ccl1/NrfE/CcsA family. In terms of assembly, may interact with Ccs1.

Its subcellular location is the plastid. It is found in the chloroplast thylakoid membrane. Functionally, required during biogenesis of c-type cytochromes (cytochrome c6 and cytochrome f) at the step of heme attachment. This chain is Cytochrome c biogenesis protein CcsA, found in Piper cenocladum (Ant piper).